The primary structure comprises 814 residues: Valine--tRNA ligase (814 aa).

A 'HIGH' region motif is present at residues 46 to 56 (PTVSGQLHIGH). Residues 536 to 540 (KMSKS) carry the 'KMSKS' region motif. Position 539 (Lys539) interacts with ATP.

This sequence belongs to the class-I aminoacyl-tRNA synthetase family. ValS type 2 subfamily. As to quaternary structure, monomer.

Its subcellular location is the cytoplasm. It catalyses the reaction tRNA(Val) + L-valine + ATP = L-valyl-tRNA(Val) + AMP + diphosphate. Its function is as follows. Catalyzes the attachment of valine to tRNA(Val). As ValRS can inadvertently accommodate and process structurally similar amino acids such as threonine, to avoid such errors, it has a 'posttransfer' editing activity that hydrolyzes mischarged Thr-tRNA(Val) in a tRNA-dependent manner. The polypeptide is Valine--tRNA ligase (Rickettsia typhi (strain ATCC VR-144 / Wilmington)).